A 296-amino-acid polypeptide reads, in one-letter code: Pantothenate synthetase (296 aa).

31–38 (MGYLHEGH) is a binding site for ATP. Residue His38 is the Proton donor of the active site. Gln62 lines the (R)-pantoate pocket. Gln62 is a binding site for beta-alanine. 148–151 (GEKD) provides a ligand contact to ATP. Gln154 provides a ligand contact to (R)-pantoate. ATP is bound by residues Val177 and 185 to 188 (LSSR).

This sequence belongs to the pantothenate synthetase family. Homodimer.

The protein localises to the cytoplasm. It catalyses the reaction (R)-pantoate + beta-alanine + ATP = (R)-pantothenate + AMP + diphosphate + H(+). It functions in the pathway cofactor biosynthesis; (R)-pantothenate biosynthesis; (R)-pantothenate from (R)-pantoate and beta-alanine: step 1/1. Functionally, catalyzes the condensation of pantoate with beta-alanine in an ATP-dependent reaction via a pantoyl-adenylate intermediate. This chain is Pantothenate synthetase, found in Deinococcus geothermalis (strain DSM 11300 / CIP 105573 / AG-3a).